The sequence spans 253 residues: tRNA uridine(34) hydroxylase (253 aa).

One can recognise a Rhodanese domain in the interval histidine 127–tyrosine 221. The active-site Cysteine persulfide intermediate is cysteine 181.

Belongs to the TrhO family.

It catalyses the reaction uridine(34) in tRNA + AH2 + O2 = 5-hydroxyuridine(34) in tRNA + A + H2O. Its function is as follows. Catalyzes oxygen-dependent 5-hydroxyuridine (ho5U) modification at position 34 in tRNAs. The sequence is that of tRNA uridine(34) hydroxylase from Xanthomonas campestris pv. campestris (strain B100).